The primary structure comprises 430 residues: Adenylosuccinate synthetase (430 aa).

Residues 12 to 18 (GDEGKGK) and 40 to 42 (GHT) each bind GTP. Catalysis depends on D13, which acts as the Proton acceptor. Residues D13 and G40 each coordinate Mg(2+). IMP-binding positions include 13–16 (DEGK), 38–41 (NAGH), T130, R144, Q224, T239, and R303. H41 acts as the Proton donor in catalysis. 299–305 (VVTGRPR) is a substrate binding site. Residues R305, 331–333 (KLD), and 413–415 (STS) each bind GTP.

It belongs to the adenylosuccinate synthetase family. Homodimer. Mg(2+) serves as cofactor.

The protein localises to the cytoplasm. The catalysed reaction is IMP + L-aspartate + GTP = N(6)-(1,2-dicarboxyethyl)-AMP + GDP + phosphate + 2 H(+). The protein operates within purine metabolism; AMP biosynthesis via de novo pathway; AMP from IMP: step 1/2. In terms of biological role, plays an important role in the de novo pathway of purine nucleotide biosynthesis. Catalyzes the first committed step in the biosynthesis of AMP from IMP. In Azorhizobium caulinodans (strain ATCC 43989 / DSM 5975 / JCM 20966 / LMG 6465 / NBRC 14845 / NCIMB 13405 / ORS 571), this protein is Adenylosuccinate synthetase.